We begin with the raw amino-acid sequence, 361 residues long: Ribosomal RNA large subunit methyltransferase M (361 aa).

Residues Ser187, 220-223 (CPGG), Asp239, Asp259, and Asp276 contribute to the S-adenosyl-L-methionine site. Catalysis depends on Lys305, which acts as the Proton acceptor.

This sequence belongs to the class I-like SAM-binding methyltransferase superfamily. RNA methyltransferase RlmE family. RlmM subfamily. As to quaternary structure, monomer.

Its subcellular location is the cytoplasm. The enzyme catalyses cytidine(2498) in 23S rRNA + S-adenosyl-L-methionine = 2'-O-methylcytidine(2498) in 23S rRNA + S-adenosyl-L-homocysteine + H(+). Catalyzes the 2'-O-methylation at nucleotide C2498 in 23S rRNA. The chain is Ribosomal RNA large subunit methyltransferase M from Shewanella sp. (strain MR-4).